The sequence spans 483 residues: BTB/POZ domain and ankyrin repeat-containing protein COCH (483 aa).

The region spanning 25 to 105 (SDVVFSVEGR…LYSGQVSIVP (81 aa)) is the BTB domain. The segment at 111 to 125 (RPNCGDRGCWHTHCT) adopts a C2HC NPR-type zinc-finger fold. Residues cysteine 114, cysteine 119, histidine 121, and cysteine 124 each contribute to the Zn(2+) site. ANK repeat units follow at residues 249 to 278 (QKIRRMRRALDSSDVELVKLMVMGEGLNLD), 279 to 308 (EALALPYAVESCSREVVKALLELGAADVNF), 313 to 342 (TGKTPLHIAAEMVSPDMVAVLLDHHADPNV), and 346 to 380 (DGVTPLDILRTLTSDFLFKGAVPGLTHIEPNKLRL). Disordered regions lie at residues 395–435 (EEGN…NSNM) and 450–483 (MSTSRLDSGDDDHNSNQREAMNPSMYHHHHSHDY). Residues 398-414 (NNNNNANNNNTGSSATN) show a composition bias toward low complexity. The span at 456–465 (DSGDDDHNSN) shows a compositional bias: basic and acidic residues.

It belongs to the plant 'ANKYRIN-BTB/POZ' family. 'NOOT-BOP-COCH-like' (NBCL) subfamily. Homodimer.

It localises to the nucleus. It is found in the cytoplasm. Its subcellular location is the cell membrane. It functions in the pathway protein modification; protein ubiquitination. In terms of biological role, may act as a substrate-specific adapter of an E3 ubiquitin-protein ligase complex (CUL3-RBX1-BTB) which mediates the ubiquitination and subsequent proteasomal degradation of target proteins. Transcriptional co-regulator involved in the promotion of leaf and floral meristem fate and determinacy. Promotes normal stipule growth and development. Required for the abscission of senescent organs, probably by regulating the cell wall disorganization in abscission zones (AZs, e.g. pulvini at the base of leaves). Down-regulates UNI expression in primordia of leaves and secondary inflorescences, and thereby controls their sizes and/or structures. Involved in the coordination of the symbiotic nodule developmental program. Promotes the formation of root nodules by interacting directly with APP1 to modulate the expression of the nuclear transcription factor Y subunit (NF-YA1), a key nodulin. Necessary for the robust maintenance of nodule identity throughout the nodule developmental program. The protein is BTB/POZ domain and ankyrin repeat-containing protein COCH of Pisum sativum (Garden pea).